Consider the following 67-residue polypeptide: Large ribosomal subunit protein uL29 (67 aa).

It belongs to the universal ribosomal protein uL29 family.

The protein is Large ribosomal subunit protein uL29 of Desulfitobacterium hafniense (strain DSM 10664 / DCB-2).